The sequence spans 237 residues: Necrosis-inducing protein NPP1 (237 aa).

The signal sequence occupies residues 1–19; that stretch reads MNVLTFLIAAAVSLAVVQA. The N-linked (GlcNAc...) asparagine glycan is linked to Asn-67. The Conserved undecapeptide motif motif lies at 103–113; that stretch reads AIMYSWYFPKD. Residues 120–126 carry the Conserved heptapetpide motif motif; it reads GHRHDWE.

Belongs to the Necrosis inducing protein (NPP1) family.

Its subcellular location is the secreted. In terms of biological role, secreted effector that acts as a pathogen-associated molecular pattern (PAMP) recognized by the plant immune system. Induces necrotic cell death and ethylene biosynthesis in parsley. Stimulates early induced host cellular responses implicated in elicitor signal transmission such as increased levels of cytoplasmic calcium, production of reactive oxygen species (ROS), and MAP kinase activation. Infiltration of NPP1 into leaves of Arabidopsis thaliana results in transcript accumulation of pathogenesis-related (PR) genes, production of ROS and ethylene, callose apposition, and hypersensitive response (HR)-like cell death. NPP1-mediated induction of the PR1 gene is salicylic acid-dependent, and requires both functional NDR1 and PAD4. The chain is Necrosis-inducing protein NPP1 from Phytophthora nicotianae (Potato buckeye rot agent).